We begin with the raw amino-acid sequence, 599 residues long: Elongation factor 4 (599 aa).

Positions 5 to 187 constitute a tr-type G domain; sequence NHIRNFSIIA…QIVQLVPPPE (183 aa). GTP is bound by residues 17 to 22 and 134 to 137; these read DHGKST and NKMD.

This sequence belongs to the TRAFAC class translation factor GTPase superfamily. Classic translation factor GTPase family. LepA subfamily.

The protein resides in the cell inner membrane. The catalysed reaction is GTP + H2O = GDP + phosphate + H(+). Its function is as follows. Required for accurate and efficient protein synthesis under certain stress conditions. May act as a fidelity factor of the translation reaction, by catalyzing a one-codon backward translocation of tRNAs on improperly translocated ribosomes. Back-translocation proceeds from a post-translocation (POST) complex to a pre-translocation (PRE) complex, thus giving elongation factor G a second chance to translocate the tRNAs correctly. Binds to ribosomes in a GTP-dependent manner. This Hahella chejuensis (strain KCTC 2396) protein is Elongation factor 4.